We begin with the raw amino-acid sequence, 342 residues long: Isopentenyl-diphosphate delta-isomerase (342 aa).

Residue R11 to K12 coordinates substrate. Residues S68, S69–T71, S99, and N128 contribute to the FMN site. Residue S99 to R101 coordinates substrate. Q162 serves as a coordination point for substrate. E163 provides a ligand contact to Mg(2+). FMN-binding positions include K194, S219, T224, G275–R277, and A296–K297.

This sequence belongs to the IPP isomerase type 2 family. Homooctamer. Dimer of tetramers. FMN serves as cofactor. It depends on NADPH as a cofactor. Mg(2+) is required as a cofactor.

The protein localises to the cytoplasm. The enzyme catalyses isopentenyl diphosphate = dimethylallyl diphosphate. Its function is as follows. Involved in the biosynthesis of isoprenoids. Catalyzes the 1,3-allylic rearrangement of the homoallylic substrate isopentenyl (IPP) to its allylic isomer, dimethylallyl diphosphate (DMAPP). The polypeptide is Isopentenyl-diphosphate delta-isomerase (Legionella pneumophila subsp. pneumophila (strain Philadelphia 1 / ATCC 33152 / DSM 7513)).